Consider the following 43-residue polypeptide: Photosystem I reaction center subunit IX (43 aa).

The chain crosses the membrane as a helical span at residues 7 to 27; the sequence is YLSVAPVLSTLWFGSLAGLLI.

This sequence belongs to the PsaJ family.

It is found in the plastid. The protein resides in the chloroplast thylakoid membrane. In terms of biological role, may help in the organization of the PsaE and PsaF subunits. This is Photosystem I reaction center subunit IX from Aethionema cordifolium (Lebanon stonecress).